The chain runs to 308 residues: Eukaryotic translation initiation factor 3 subunit G (308 aa).

The segment at 1-23 (MAPVAAPSTSQPAGGKPMNWADE) is disordered. Residues 225-303 (PTLRVTNLSE…LILSCQWSLP (79 aa)) form the RRM domain.

Belongs to the eIF-3 subunit G family. Component of the eukaryotic translation initiation factor 3 (eIF-3) complex.

The protein localises to the cytoplasm. Its function is as follows. RNA-binding component of the eukaryotic translation initiation factor 3 (eIF-3) complex, which is involved in protein synthesis of a specialized repertoire of mRNAs and, together with other initiation factors, stimulates binding of mRNA and methionyl-tRNAi to the 40S ribosome. The eIF-3 complex specifically targets and initiates translation of a subset of mRNAs involved in cell proliferation. This subunit can bind 18S rRNA. The sequence is that of Eukaryotic translation initiation factor 3 subunit G from Mycosarcoma maydis (Corn smut fungus).